Consider the following 513-residue polypeptide: GMP synthase [glutamine-hydrolyzing] (513 aa).

The region spanning L9–Q198 is the Glutamine amidotransferase type-1 domain. The Nucleophile role is filled by C86. Active-site residues include H172 and E174. Residues W199 to R388 form the GMPS ATP-PPase domain. ATP is bound at residue S226 to S232.

Homodimer.

The enzyme catalyses XMP + L-glutamine + ATP + H2O = GMP + L-glutamate + AMP + diphosphate + 2 H(+). Its pathway is purine metabolism; GMP biosynthesis; GMP from XMP (L-Gln route): step 1/1. Its function is as follows. Catalyzes the synthesis of GMP from XMP. The chain is GMP synthase [glutamine-hydrolyzing] from Staphylococcus aureus (strain USA300).